The chain runs to 106 residues: MADWNGEYISPYAEHGKKSEQVKKITVSIPLKVLKVLTDERTRRQINNLRHATNSELLCEAFLHAYTGQPLPTDEDLRKDRPDDIPTEAKALMTAMGIEFEAFDEE.

Belongs to the MetJ family. Homodimer.

It localises to the cytoplasm. This regulatory protein, when combined with SAM (S-adenosylmethionine) represses the expression of the methionine regulon and of enzymes involved in SAM synthesis. This is Met repressor from Vibrio campbellii (strain ATCC BAA-1116).